A 227-amino-acid chain; its full sequence is LexA repressor (227 aa).

The segment at residues 25–45 (FDEMKDALDLRSKSGIHRLIT) is a DNA-binding region (H-T-H motif). Catalysis depends on for autocatalytic cleavage activity residues serine 148 and lysine 186.

Belongs to the peptidase S24 family. Homodimer.

It carries out the reaction Hydrolysis of Ala-|-Gly bond in repressor LexA.. Represses a number of genes involved in the response to DNA damage (SOS response), including recA and lexA. In the presence of single-stranded DNA, RecA interacts with LexA causing an autocatalytic cleavage which disrupts the DNA-binding part of LexA, leading to derepression of the SOS regulon and eventually DNA repair. This Cereibacter sphaeroides (strain ATCC 17029 / ATH 2.4.9) (Rhodobacter sphaeroides) protein is LexA repressor.